Reading from the N-terminus, the 140-residue chain is ATP synthase epsilon chain (140 aa).

This sequence belongs to the ATPase epsilon chain family. F-type ATPases have 2 components, CF(1) - the catalytic core - and CF(0) - the membrane proton channel. CF(1) has five subunits: alpha(3), beta(3), gamma(1), delta(1), epsilon(1). CF(0) has three main subunits: a, b and c.

It localises to the cell inner membrane. Its function is as follows. Produces ATP from ADP in the presence of a proton gradient across the membrane. This Bordetella bronchiseptica (strain ATCC BAA-588 / NCTC 13252 / RB50) (Alcaligenes bronchisepticus) protein is ATP synthase epsilon chain.